Consider the following 348-residue polypeptide: Sec-independent protein translocase protein TatC (348 aa).

6 helical membrane passes run 7-27 (LCLT…MDIL), 162-182 (VVIS…PGLL), 192-212 (CMAV…FIVL), 244-264 (MILM…FVKL), 278-298 (YAIV…DVAT), and 299-319 (MMLM…LAWM).

It belongs to the TatC family. In terms of assembly, forms a complex with TatA.

The protein localises to the cell membrane. Its function is as follows. Part of the twin-arginine translocation (Tat) system that transports large folded proteins containing a characteristic twin-arginine motif in their signal peptide across membranes. This Akkermansia muciniphila (strain ATCC BAA-835 / DSM 22959 / JCM 33894 / BCRC 81048 / CCUG 64013 / CIP 107961 / Muc) protein is Sec-independent protein translocase protein TatC.